The primary structure comprises 188 residues: Gag polyprotein (188 aa).

Over residues 77–90 (VGETTVQRDAKMAP) the composition is skewed to basic and acidic residues. A disordered region spans residues 77 to 99 (VGETTVQRDAKMAPEETATPKTV). The PPXY motif motif lies at 121-124 (PPPY). The tract at residues 130-166 (YPSLAGVGEQQGQGGDTPRGAEQPRAEPGHAGLAPGP) is disordered.

Post-translationally, specific enzymatic cleavages in vivo yield mature proteins.

The protein localises to the virion. The protein is Gag polyprotein (ev-2) of Galliformes (EV-2).